Reading from the N-terminus, the 210-residue chain is Viral protein 1 (210 aa).

This Chaetoceros (Chaetoceros sp. DNA virus 7) protein is Viral protein 1.